Here is an 87-residue protein sequence, read N- to C-terminus: DNA-directed RNA polymerase subunit omega (87 aa).

The protein belongs to the RNA polymerase subunit omega family. As to quaternary structure, the RNAP catalytic core consists of 2 alpha, 1 beta, 1 beta' and 1 omega subunit. When a sigma factor is associated with the core the holoenzyme is formed, which can initiate transcription.

It carries out the reaction RNA(n) + a ribonucleoside 5'-triphosphate = RNA(n+1) + diphosphate. In terms of biological role, promotes RNA polymerase assembly. Latches the N- and C-terminal regions of the beta' subunit thereby facilitating its interaction with the beta and alpha subunits. In Pseudomonas entomophila (strain L48), this protein is DNA-directed RNA polymerase subunit omega.